We begin with the raw amino-acid sequence, 206 residues long: Large ribosomal subunit protein uL4 (206 aa).

The disordered stretch occupies residues 45 to 85; that stretch reads QGNRAQKDREQVKHTTKKPWRQKGTGRARAGMSSSPLWRGG. Residues 58–70 are compositionally biased toward basic residues; sequence HTTKKPWRQKGTG.

Belongs to the universal ribosomal protein uL4 family. Part of the 50S ribosomal subunit.

In terms of biological role, one of the primary rRNA binding proteins, this protein initially binds near the 5'-end of the 23S rRNA. It is important during the early stages of 50S assembly. It makes multiple contacts with different domains of the 23S rRNA in the assembled 50S subunit and ribosome. Its function is as follows. Forms part of the polypeptide exit tunnel. This is Large ribosomal subunit protein uL4 from Burkholderia mallei (strain NCTC 10247).